The chain runs to 499 residues: Ethanolamine-phosphate phospho-lyase (499 aa).

Position 278 is an N6-(pyridoxal phosphate)lysine (K278). The segment covering 468–479 (RDSTTDSKENPS) has biased composition (basic and acidic residues). The tract at residues 468–499 (RDSTTDSKENPSRKRNGMCTDTHSLLSKRLKT) is disordered.

It belongs to the class-III pyridoxal-phosphate-dependent aminotransferase family. As to quaternary structure, homotetramer. Requires pyridoxal 5'-phosphate as cofactor.

The protein localises to the mitochondrion. The catalysed reaction is phosphoethanolamine + H2O = acetaldehyde + NH4(+) + phosphate. Catalyzes the pyridoxal-phosphate-dependent breakdown of phosphoethanolamine, converting it to ammonia, inorganic phosphate and acetaldehyde. This chain is Ethanolamine-phosphate phospho-lyase (ETNPPL), found in Homo sapiens (Human).